Consider the following 475-residue polypeptide: Probable L-cysteine desulfhydrase, chloroplastic (475 aa).

A chloroplast-targeting transit peptide spans 1–24 (MASSLSPPEEASYHHRHTKRYTSS). Positions 1 to 40 (MASSLSPPEEASYHHRHTKRYTSSASSASSTTNGTVESSV) are disordered. Over residues 22–32 (TSSASSASSTT) the composition is skewed to low complexity. Position 284 is an N6-(pyridoxal phosphate)lysine (Lys-284).

This sequence belongs to the class-V pyridoxal-phosphate-dependent aminotransferase family. In terms of assembly, interacts in vitro with QS.

The protein localises to the plastid. Its subcellular location is the chloroplast. Functionally, may catalyze the production of hydrogen sulfide (H2S) from cysteine. The sequence is that of Probable L-cysteine desulfhydrase, chloroplastic from Arabidopsis thaliana (Mouse-ear cress).